A 333-amino-acid chain; its full sequence is Holliday junction branch migration complex subunit RuvB (333 aa).

Positions 1 to 182 (MDERLLSGES…FGVLSRLEYY (182 aa)) are large ATPase domain (RuvB-L). ATP contacts are provided by residues leucine 21, arginine 22, glycine 63, lysine 66, threonine 67, threonine 68, 129-131 (EDF), arginine 172, tyrosine 182, and arginine 219. Residue threonine 67 participates in Mg(2+) binding. A small ATPAse domain (RuvB-S) region spans residues 183-253 (TVDQLSAIVE…ITQMALELLQ (71 aa)). The segment at 256-333 (KLGLDHIDHK…EHFGMEIPKV (78 aa)) is head domain (RuvB-H). Positions 311 and 316 each coordinate DNA.

This sequence belongs to the RuvB family. Homohexamer. Forms an RuvA(8)-RuvB(12)-Holliday junction (HJ) complex. HJ DNA is sandwiched between 2 RuvA tetramers; dsDNA enters through RuvA and exits via RuvB. An RuvB hexamer assembles on each DNA strand where it exits the tetramer. Each RuvB hexamer is contacted by two RuvA subunits (via domain III) on 2 adjacent RuvB subunits; this complex drives branch migration. In the full resolvosome a probable DNA-RuvA(4)-RuvB(12)-RuvC(2) complex forms which resolves the HJ.

The protein resides in the cytoplasm. It carries out the reaction ATP + H2O = ADP + phosphate + H(+). The RuvA-RuvB-RuvC complex processes Holliday junction (HJ) DNA during genetic recombination and DNA repair, while the RuvA-RuvB complex plays an important role in the rescue of blocked DNA replication forks via replication fork reversal (RFR). RuvA specifically binds to HJ cruciform DNA, conferring on it an open structure. The RuvB hexamer acts as an ATP-dependent pump, pulling dsDNA into and through the RuvAB complex. RuvB forms 2 homohexamers on either side of HJ DNA bound by 1 or 2 RuvA tetramers; 4 subunits per hexamer contact DNA at a time. Coordinated motions by a converter formed by DNA-disengaged RuvB subunits stimulates ATP hydrolysis and nucleotide exchange. Immobilization of the converter enables RuvB to convert the ATP-contained energy into a lever motion, pulling 2 nucleotides of DNA out of the RuvA tetramer per ATP hydrolyzed, thus driving DNA branch migration. The RuvB motors rotate together with the DNA substrate, which together with the progressing nucleotide cycle form the mechanistic basis for DNA recombination by continuous HJ branch migration. Branch migration allows RuvC to scan DNA until it finds its consensus sequence, where it cleaves and resolves cruciform DNA. The sequence is that of Holliday junction branch migration complex subunit RuvB from Bacillus cereus (strain B4264).